The chain runs to 877 residues: Probable sulfate permease C3H7.02 (877 aa).

13 helical membrane passes run 133–153, 161–181, 186–206, 221–241, 243–263, 292–312, 329–349, 384–404, 424–444, 461–481, 484–504, 518–538, and 543–563; these read WLVYDFIAGITVGCVVVPQGM, LPAQYGLYSSFVGVAIYCIFA, VSIGPVAVMSLVTSKVIANVQ, LALLAGAITCGLGLLRLGFII, FIPVPAVAGFTTGSALNIMAG, LPHTKVDAAFGLVSLFILYLV, VFFLTNVLRSAVIIIVGTAIS, LCADLASELPVSVIVLLLEHI, LIAMGATNLIGVFFHAYPATG, LGGIFTAGVVVLALYCLTGAF, IPNAVLSAVIIHSVFDLIIPW, ALIFICAVFVSVFSSIENGIY, and LSAALLLFRIAKPSGSFLGIL. Positions 594–747 constitute an STAS domain; it reads NLTVRDPPAG…SRSIEVGSAA (154 aa). Disordered regions lie at residues 643-663 and 793-821; these read KASDRPWNDPAPRKKKNAPEV and ADSDTISVSDDKDKKVEGHRPSQDPTFSH. Basic and acidic residues predominate over residues 801–821; it reads SDDKDKKVEGHRPSQDPTFSH.

This sequence belongs to the SLC26A/SulP transporter (TC 2.A.53) family.

It localises to the membrane. In terms of biological role, high affinity uptake of sulfate into the cell. The sequence is that of Probable sulfate permease C3H7.02 from Schizosaccharomyces pombe (strain 972 / ATCC 24843) (Fission yeast).